Here is a 550-residue protein sequence, read N- to C-terminus: Arginine--tRNA ligase (550 aa).

The short motif at 130-140 is the 'HIGH' region element; sequence ANPTGPIHIGG.

The protein belongs to the class-I aminoacyl-tRNA synthetase family. As to quaternary structure, monomer.

It is found in the cytoplasm. It carries out the reaction tRNA(Arg) + L-arginine + ATP = L-arginyl-tRNA(Arg) + AMP + diphosphate. The protein is Arginine--tRNA ligase (argS) of Mycobacterium leprae (strain TN).